A 381-amino-acid polypeptide reads, in one-letter code: Sulfate adenylyltransferase (381 aa).

It belongs to the sulfate adenylyltransferase family.

The enzyme catalyses sulfate + ATP + H(+) = adenosine 5'-phosphosulfate + diphosphate. The protein operates within sulfur metabolism; hydrogen sulfide biosynthesis; sulfite from sulfate: step 1/3. The protein is Sulfate adenylyltransferase of Chloroflexus aurantiacus (strain ATCC 29366 / DSM 635 / J-10-fl).